The primary structure comprises 218 residues: Hypoxanthine-guanine phosphoribosyltransferase (218 aa).

Lysine 69 provides a ligand contact to GMP. Residue lysine 103 is modified to N6-acetyllysine. Lysine 115 is covalently cross-linked (Glycyl lysine isopeptide (Lys-Gly) (interchain with G-Cter in SUMO1); alternate). Lysine 115 participates in a covalent cross-link: Glycyl lysine isopeptide (Lys-Gly) (interchain with G-Cter in SUMO2); alternate. GMP-binding positions include glutamate 134–threonine 142, lysine 166, lysine 186–valine 188, and aspartate 194. Aspartate 138 (proton acceptor) is an active-site residue. Position 142 is a phosphothreonine (threonine 142). Aspartate 194 contacts Mg(2+).

It belongs to the purine/pyrimidine phosphoribosyltransferase family. As to quaternary structure, homotetramer. The cofactor is Mg(2+).

The protein localises to the cytoplasm. It carries out the reaction IMP + diphosphate = hypoxanthine + 5-phospho-alpha-D-ribose 1-diphosphate. The enzyme catalyses GMP + diphosphate = guanine + 5-phospho-alpha-D-ribose 1-diphosphate. It participates in purine metabolism; IMP biosynthesis via salvage pathway; IMP from hypoxanthine: step 1/1. Its function is as follows. Converts guanine to guanosine monophosphate, and hypoxanthine to inosine monophosphate. Transfers the 5-phosphoribosyl group from 5-phosphoribosylpyrophosphate onto the purine. Plays a central role in the generation of purine nucleotides through the purine salvage pathway. The protein is Hypoxanthine-guanine phosphoribosyltransferase (Hprt1) of Mus musculus (Mouse).